The following is a 742-amino-acid chain: Eukaryotic translation initiation factor 3 subunit B (742 aa).

The span at 1–10 (MAPSFDTLSE) shows a compositional bias: polar residues. Residues 1 to 20 (MAPSFDTLSEQDLHEEEEEE) are disordered. Positions 40-126 (TFVVIDGLPI…HTLAVNKLMD (87 aa)) constitute an RRM domain. 5 WD repeats span residues 193–230 (AHWT…KLKQ), 232–290 (PHPF…RSFV), 304–345 (QPKK…LLGK), 515–558 (IEKK…EKPE), and 573–611 (VEHY…HTFA).

It belongs to the eIF-3 subunit B family. As to quaternary structure, component of the eukaryotic translation initiation factor 3 (eIF-3) complex.

It is found in the cytoplasm. Its function is as follows. RNA-binding component of the eukaryotic translation initiation factor 3 (eIF-3) complex, which is involved in protein synthesis of a specialized repertoire of mRNAs and, together with other initiation factors, stimulates binding of mRNA and methionyl-tRNAi to the 40S ribosome. The eIF-3 complex specifically targets and initiates translation of a subset of mRNAs involved in cell proliferation. The chain is Eukaryotic translation initiation factor 3 subunit B (prt1) from Aspergillus terreus (strain NIH 2624 / FGSC A1156).